The primary structure comprises 509 residues: Cytochrome P450 monooxygenase ARMGADRAFT_974139 (509 aa).

A helical membrane pass occupies residues 4–24; that stretch reads ASLAVVVWAILLVLWLRRIFG. N-linked (GlcNAc...) asparagine glycans are attached at residues Asn-96 and Asn-279. Position 439 (Cys-439) interacts with heme.

This sequence belongs to the cytochrome P450 family. It depends on heme as a cofactor.

It localises to the membrane. It functions in the pathway secondary metabolite biosynthesis. Cytochrome P450 monooxygenase, part of the gene cluster that mediates the biosynthesis of melleolides, a range of antifungal and phytotoxic polyketide derivatives composed of an orsellinic acid (OA) moiety esterified to various sesquiterpene alcohols. The first step in melleolides biosynthesis is performed by the delta(6)-protoilludene synthase PRO1 which catalyzes the cyclization of farnesyl diphosphate to protoilludene. The orsellinic acid synthase armB produces OA by condensing acetyl-CoA with 3 malonyl-CoA units in a three-round chain elongation reaction folowed by a C2-C7 ring closure. ArmB further catalyzes the trans-esterification of OA to the various sesquiterpene alcohols resulting from the hydroxylation of protoilludene. The melleolides cluster also includes 5 cytochrome P450 monooxygenases, 4 NAD(+)-dependent oxidoreductases, one flavin-dependent oxidoreductase, and one O-methyltransferase. The cytochrome P450 monooxygenases may be involved in protoilludene hydroxylation to elaborate melleolides with multiple alcohol groups, such as melleolide D, which carries alcohol functionalities at C-4, C-5, C-10, and C-13. The role of the NAD(+)-dependent enzymes remains unknown. Numerous melleolides, including arnamial, show 5'-O-methylation of the aromatic moiety which may be catalyzed by the methyltransferase encoded in the cluster. The flavin-dependent oxidoreductase might represent the dehydrogenase yielding the aldehyde in position 1 of arnamial and other melleolides. Finally, several halogenase localized outside of the cluster, are able to catalyze the transfer of a single chlorine atom to the melleolide backbone, resulting in a 6'-chloromelleolide product. The protein is Cytochrome P450 monooxygenase ARMGADRAFT_974139 of Armillaria gallica (Bulbous honey fungus).